The sequence spans 400 residues: Cytochrome P450 BJ-1 homolog (400 aa).

Residue Cys-349 participates in heme binding.

Belongs to the cytochrome P450 family. Heme serves as cofactor.

Functionally, cytochromes P450 are a group of heme-thiolate monooxygenases. They oxidize a variety of structurally unrelated compounds, including steroids, fatty acids, and xenobiotics. This Sinorhizobium fredii (strain NBRC 101917 / NGR234) protein is Cytochrome P450 BJ-1 homolog (cyp112A2).